A 271-amino-acid polypeptide reads, in one-letter code: Multivesicular body subunit 12A (271 aa).

The MABP domain occupies 7 to 149 (SAPLAGLVWS…GFAIWCKKSK (143 aa)). Position 128 is a phosphothreonine (Thr128). The segment at 149-192 (KAPRPVPKPRTLSQDMRGLSLDPPKEPSKGSHPERTLSRLGSRA) is disordered. Residues 153 to 158 (PVPKPR) carry the SH3-binding motif. Residues Ser161 and Ser168 each carry the phosphoserine modification. Basic and acidic residues predominate over residues 171-185 (PPKEPSKGSHPERTL). The interval 190 to 271 (SRASTLRRTD…AAARLPPSVS (82 aa)) is interaction with TSG101, VPS37B and VPS28. A phosphoserine mark is found at Ser193 and Ser200. At Tyr202 the chain carries Phosphotyrosine. Residue Ser205 is modified to Phosphoserine. Residues 213–263 (MDGVPFTLHPRFEGKSCGPLNLSAFGDLTIKSLADIEKEYNYGFVVEKTAA) enclose the UMA domain.

This sequence belongs to the MVB12 family. As to quaternary structure, component of the ESCRT-I complex (endosomal sorting complex required for transport I) which consists of TSG101, VPS28, a VPS37 protein (VPS37A to -D) and MVB12A or MVB12B in a 1:1:1:1 stoichiometry. Interacts with CD2AP and CIN85/SH3KBP1. Interacts with CD2AP (via one of the SH3 domains). Interacts with TSG101; the association appears to be mediated by the TSG101-VPS37 binary subcomplex. Interacts with VPS28. Interacts with VPS37B; the association appears to be mediated by the TSG101-VPS37 binary subcomplex. Interacts with VPS37C; the association appears to be mediated by the TSG101-VPS37 binary subcomplex. Interacts with VPS37D; the association appears to be mediated by the TSG101-VPS37 binary subcomplex. Interacts with CEP55. Post-translationally, phosphorylated on Tyr-202 upon EGF stimulation. Phosphorylation is required for interaction with CD2AP and CIN85/SH3KBP1.

Its subcellular location is the cytoplasm. It localises to the cytoskeleton. It is found in the nucleus. The protein localises to the endosome. The protein resides in the microtubule organizing center. Its subcellular location is the centrosome. It localises to the late endosome membrane. Component of the ESCRT-I complex, a regulator of vesicular trafficking process. Required for the sorting of endocytic ubiquitinated cargos into multivesicular bodies. May be involved in the ligand-mediated internalization and down-regulation of EGF receptor. The polypeptide is Multivesicular body subunit 12A (Mvb12a) (Mus musculus (Mouse)).